The sequence spans 95 residues: Translation initiation factor 1A (95 aa).

Positions 6–80 (SRKNLRMPEE…EKADITWRYE (75 aa)) constitute an S1-like domain.

It belongs to the eIF-1A family.

In terms of biological role, seems to be required for maximal rate of protein biosynthesis. Enhances ribosome dissociation into subunits and stabilizes the binding of the initiator Met-tRNA(I) to 40 S ribosomal subunits. This Haloarcula marismortui (strain ATCC 43049 / DSM 3752 / JCM 8966 / VKM B-1809) (Halobacterium marismortui) protein is Translation initiation factor 1A.